Consider the following 220-residue polypeptide: Pyridoxine/pyridoxamine 5'-phosphate oxidase (220 aa).

Residues 8–11 and Lys66 each bind substrate; that span reads RKSY. FMN-binding positions include 61–66, 76–77, Arg82, and Lys83; these read RVVLIK and FT. Substrate is bound by residues Tyr123, Arg127, and Ser131. Residues 140–141 and Trp184 each bind FMN; that span reads QS. Residue 190–192 coordinates substrate; that stretch reads RLH. Arg194 is a binding site for FMN.

Belongs to the pyridoxamine 5'-phosphate oxidase family. As to quaternary structure, homodimer. FMN serves as cofactor.

The catalysed reaction is pyridoxamine 5'-phosphate + O2 + H2O = pyridoxal 5'-phosphate + H2O2 + NH4(+). It carries out the reaction pyridoxine 5'-phosphate + O2 = pyridoxal 5'-phosphate + H2O2. It functions in the pathway cofactor metabolism; pyridoxal 5'-phosphate salvage; pyridoxal 5'-phosphate from pyridoxamine 5'-phosphate: step 1/1. It participates in cofactor metabolism; pyridoxal 5'-phosphate salvage; pyridoxal 5'-phosphate from pyridoxine 5'-phosphate: step 1/1. Catalyzes the oxidation of either pyridoxine 5'-phosphate (PNP) or pyridoxamine 5'-phosphate (PMP) into pyridoxal 5'-phosphate (PLP). The sequence is that of Pyridoxine/pyridoxamine 5'-phosphate oxidase from Albidiferax ferrireducens (strain ATCC BAA-621 / DSM 15236 / T118) (Rhodoferax ferrireducens).